The following is a 550-amino-acid chain: Chaperonin GroEL (550 aa).

Residues 30 to 33 (TLGP), Lys51, 87 to 91 (DGTTT), Gly415, 479 to 481 (NAA), and Asp495 contribute to the ATP site. The interval 525-550 (PKDEKSSSELNSAPGNGMGGGMGGMM) is disordered. The segment covering 540–550 (NGMGGGMGGMM) has biased composition (gly residues).

Belongs to the chaperonin (HSP60) family. As to quaternary structure, forms a cylinder of 14 subunits composed of two heptameric rings stacked back-to-back. Interacts with the co-chaperonin GroES.

Its subcellular location is the cytoplasm. It carries out the reaction ATP + H2O + a folded polypeptide = ADP + phosphate + an unfolded polypeptide.. Its function is as follows. Together with its co-chaperonin GroES, plays an essential role in assisting protein folding. The GroEL-GroES system forms a nano-cage that allows encapsulation of the non-native substrate proteins and provides a physical environment optimized to promote and accelerate protein folding. This Buchnera aphidicola subsp. Cinara cedri (strain Cc) protein is Chaperonin GroEL.